Reading from the N-terminus, the 260-residue chain is uncharacterized protein (260 aa).

A coiled-coil region spans residues 1-38 (MNWTREIEQYKQVVASYKLKMKRMEMKISDISEEKRQS).

This is an uncharacterized protein from Caenorhabditis elegans.